A 462-amino-acid polypeptide reads, in one-letter code: Argininosuccinate lyase (462 aa).

It belongs to the lyase 1 family. Argininosuccinate lyase subfamily.

It is found in the cytoplasm. It carries out the reaction 2-(N(omega)-L-arginino)succinate = fumarate + L-arginine. It participates in amino-acid biosynthesis; L-arginine biosynthesis; L-arginine from L-ornithine and carbamoyl phosphate: step 3/3. The protein is Argininosuccinate lyase of Methylobacterium sp. (strain 4-46).